The chain runs to 652 residues: UvrABC system protein C (652 aa).

Residues 19–96 (KTSGVYLWKD…IKKHKPRYNI (78 aa)) enclose the GIY-YIG domain. The region spanning 203–238 (EDVSGTLKEKMKEAAEKKEFEKAARLRDGIQAVYAL) is the UVR domain.

The protein belongs to the UvrC family. In terms of assembly, interacts with UvrB in an incision complex.

Its subcellular location is the cytoplasm. Its function is as follows. The UvrABC repair system catalyzes the recognition and processing of DNA lesions. UvrC both incises the 5' and 3' sides of the lesion. The N-terminal half is responsible for the 3' incision and the C-terminal half is responsible for the 5' incision. The polypeptide is UvrABC system protein C (Treponema denticola (strain ATCC 35405 / DSM 14222 / CIP 103919 / JCM 8153 / KCTC 15104)).